The following is a 311-amino-acid chain: Thymidylate synthase (311 aa).

DUMP-binding positions include Arg-28 and 172-173 (RR). The Nucleophile role is filled by Cys-192. DUMP contacts are provided by residues 213–216 (RSCD), Asn-224, and 254–256 (HLY). (6R)-5,10-methylene-5,6,7,8-tetrahydrofolate is bound at residue Asp-216. Position 310 (Ala-310) interacts with (6R)-5,10-methylene-5,6,7,8-tetrahydrofolate.

The protein belongs to the thymidylate synthase family. Bacterial-type ThyA subfamily. In terms of assembly, homodimer.

The protein resides in the cytoplasm. It catalyses the reaction dUMP + (6R)-5,10-methylene-5,6,7,8-tetrahydrofolate = 7,8-dihydrofolate + dTMP. The protein operates within pyrimidine metabolism; dTTP biosynthesis. Catalyzes the reductive methylation of 2'-deoxyuridine-5'-monophosphate (dUMP) to 2'-deoxythymidine-5'-monophosphate (dTMP) while utilizing 5,10-methylenetetrahydrofolate (mTHF) as the methyl donor and reductant in the reaction, yielding dihydrofolate (DHF) as a by-product. This enzymatic reaction provides an intracellular de novo source of dTMP, an essential precursor for DNA biosynthesis. The sequence is that of Thymidylate synthase from Sphingopyxis alaskensis (strain DSM 13593 / LMG 18877 / RB2256) (Sphingomonas alaskensis).